The primary structure comprises 2393 residues: Leucine-rich repeat serine/threonine-protein kinase 1 (2393 aa).

ANK repeat units follow at residues 56–86, 90–120, 123–152, 197–226, 230–259, 264–293, 317–347, 361–390, 407–437, and 439–464; these read HGRT…SLNL, RGKT…PMKS, EGHC…KESE, EDET…HLLQ, SKDT…QLVK, EGST…PSEF, ECRT…SIDG, RGRT…DVNL, IGSG…DTDN, and ALRL…FADP. LRR repeat units lie at residues 532–553, 555–576, 580–600, 604–625, and 627–648; these read AITR…LFQM, SLRS…TYYI, SLEI…QFLS, QLQQ…IWLC, and ALKE…ARAS. Positions 649-675 are disordered; that stretch reads RGERPRLNNSNNNFNTQSPTQESNPIV. LRR repeat units follow at residues 718 to 739, 742 to 763, and 765 to 787; these read TLTT…LACT, RLLI…ACVP, and HLRT…SPLH. Residues 797–844 are disordered; sequence TSNGSMLPKRRNSPARQHRSRSKSAVRSQRSLSVSRHHALIDPQKEEE. The segment covering 804–820 has biased composition (basic residues); sequence PKRRNSPARQHRSRSKS. A compositionally biased stretch (polar residues) spans 821–830; sequence AVRSQRSLSV. The segment covering 835–844 has biased composition (basic and acidic residues); sequence ALIDPQKEEE. LRR repeat units lie at residues 856-877, 883-905, 906-928, and 930-952; these read WLKT…NAAS, ALNV…ARLT, LLSM…YGML, and RLWS…VNVE. Positions 969–1167 constitute a Roc domain; that stretch reads ESKTYHHLRL…NTIYRTAWEV (199 aa). GTP contacts are provided by residues 982-989, 1040-1044, and 1098-1101; these read GSDGVGKS, DFGGQ, and TNLD. A COR domain is found at 1233–1422; sequence FYAACTFLHD…GFWSRLVTRI (190 aa). 2 disordered regions span residues 1361–1382 and 1596–1633; these read CPSP…TDQN and RNGS…RTTG. Polar residues-rich tracts occupy residues 1366-1382 and 1620-1633; these read GSPT…TDQN and ITSS…RTTG. The region spanning 1694 to 1992 is the Protein kinase domain; it reads LKRSRMLGRG…LVGFCAAPEF (299 aa). ATP-binding positions include 1700 to 1708 and Lys-1726; that span reads LGRGAFGFV. Catalysis depends on Asp-1847, which acts as the Proton acceptor.

It belongs to the protein kinase superfamily. TKL Ser/Thr protein kinase family. ROCO subfamily. The cofactor is Mg(2+). Requires Mn(2+) as cofactor. Expressed in cell bodies, but not in dendritic or axonal processes, of adult head neurons. Also present in non-neuronal tissues, such as the body wall musculature and the epithelial cells of the nematode vulva.

The protein resides in the golgi apparatus. It catalyses the reaction L-seryl-[protein] + ATP = O-phospho-L-seryl-[protein] + ADP + H(+). The enzyme catalyses L-threonyl-[protein] + ATP = O-phospho-L-threonyl-[protein] + ADP + H(+). In terms of biological role, determines polarized sorting of synaptic vesicle (SV) proteins to the axons by excluding SV proteins from the dendrite-specific transport machinery in the Golgi. Role in stress response. Appears to antagonize the effects of pink-1 both in the regulation of axon guidance and stress response. This chain is Leucine-rich repeat serine/threonine-protein kinase 1 (lrk-1), found in Caenorhabditis elegans.